Consider the following 380-residue polypeptide: RNA-binding motif protein, Y chromosome, family 9 (380 aa).

One can recognise an RRM domain in the interval 8–86 (GKIFIGGLNI…KRIKVKQARR (79 aa)). Disordered stretches follow at residues 82 to 226 (KQAR…STSR) and 279 to 358 (HEAP…YSAS). A compositionally biased stretch (polar residues) spans 166–178 (RSATSAQTRSNTG). Basic and acidic residues-rich tracts occupy residues 180–190 (RGREPHRREIS) and 333–351 (IDREYFDREGRQERGHSPK).

In terms of tissue distribution, testis-specific.

It localises to the nucleus. Functionally, RNA-binding protein which may be involved in spermatogenesis. May be required for sperm development, possibly by participating in pre-mRNA splicing in the testis. The protein is RNA-binding motif protein, Y chromosome, family 9 of Mus musculus (Mouse).